The following is a 260-amino-acid chain: 3-methyl-2-oxobutanoate hydroxymethyltransferase (260 aa).

Positions 44 and 83 each coordinate Mg(2+). Residues aspartate 44 to serine 45, aspartate 83, and lysine 113 contribute to the 3-methyl-2-oxobutanoate site. Glutamate 115 contacts Mg(2+). Catalysis depends on glutamate 183, which acts as the Proton acceptor.

The protein belongs to the PanB family. As to quaternary structure, homodecamer; pentamer of dimers. Mg(2+) serves as cofactor.

It is found in the cytoplasm. It carries out the reaction 3-methyl-2-oxobutanoate + (6R)-5,10-methylene-5,6,7,8-tetrahydrofolate + H2O = 2-dehydropantoate + (6S)-5,6,7,8-tetrahydrofolate. It participates in cofactor biosynthesis; (R)-pantothenate biosynthesis; (R)-pantoate from 3-methyl-2-oxobutanoate: step 1/2. Functionally, catalyzes the reversible reaction in which hydroxymethyl group from 5,10-methylenetetrahydrofolate is transferred onto alpha-ketoisovalerate to form ketopantoate. The polypeptide is 3-methyl-2-oxobutanoate hydroxymethyltransferase (Gloeobacter violaceus (strain ATCC 29082 / PCC 7421)).